The primary structure comprises 736 residues: Catalase-peroxidase (736 aa).

Positions 1–25 (MSENGKCPVTGKTSKPVAGGGTSNQ) are disordered. The segment at residues 96-224 (WHSAGTYRMG…LAAVQMGLIY (129 aa)) is a cross-link (tryptophyl-tyrosyl-methioninium (Trp-Tyr) (with M-250)). The active-site Proton acceptor is His97. The segment at residues 224–250 (YVNPEGPDGNPDPIASGKDVRETFARM) is a cross-link (tryptophyl-tyrosyl-methioninium (Tyr-Met) (with W-96)). Position 265 (His265) interacts with heme b. Positions 294–313 (GWKSSHGRGKGGDTISSGIE) are disordered.

It belongs to the peroxidase family. Peroxidase/catalase subfamily. As to quaternary structure, homodimer or homotetramer. The cofactor is heme b. Post-translationally, formation of the three residue Trp-Tyr-Met cross-link is important for the catalase, but not the peroxidase activity of the enzyme.

The enzyme catalyses H2O2 + AH2 = A + 2 H2O. It catalyses the reaction 2 H2O2 = O2 + 2 H2O. In terms of biological role, bifunctional enzyme with both catalase and broad-spectrum peroxidase activity. This is Catalase-peroxidase from Desulfatibacillum aliphaticivorans.